The chain runs to 218 residues: MEISMKIILLGAPGAGKGTQAQFIMNKFGIPQISTGDMFRAAIKAGTELGKQAKALMDEGKLVPDELTVALVKDRIAQPDCANGFLLDGFPRTIPQADALKDSGVNIDYVLEFDVPDEVIVERMSGRRVHQASGRSYHIVYNPPKVEGKDDVTGEDLIIRADDKPETVLDRLAVYHKQTQPLVDYYQAEANAGNTKYFRLDGTKKVEEVSAELNSILG.

ATP is bound at residue 14-19 (GAGKGT). The tract at residues 34-63 (STGDMFRAAIKAGTELGKQAKALMDEGKLV) is NMP. Residues T35, R40, 61 to 63 (KLV), 89 to 92 (GFPR), and Q96 each bind AMP. The segment at 126-163 (GRRVHQASGRSYHIVYNPPKVEGKDDVTGEDLIIRADD) is LID. ATP-binding positions include R127 and 136 to 137 (SY). Residues R160 and R171 each contribute to the AMP site. K204 contacts ATP.

This sequence belongs to the adenylate kinase family. As to quaternary structure, monomer.

The protein localises to the cytoplasm. The catalysed reaction is AMP + ATP = 2 ADP. It participates in purine metabolism; AMP biosynthesis via salvage pathway; AMP from ADP: step 1/1. Its function is as follows. Catalyzes the reversible transfer of the terminal phosphate group between ATP and AMP. Plays an important role in cellular energy homeostasis and in adenine nucleotide metabolism. In Mannheimia succiniciproducens (strain KCTC 0769BP / MBEL55E), this protein is Adenylate kinase.